Consider the following 208-residue polypeptide: Large ribosomal subunit protein uL4 (208 aa).

Residues 46–97 (QGTHKTKTRAEVRGGGKKPYRQKGTGNARQGSSRSPIMVGGGTIFGPQPRSY) are disordered. Polar residues predominate over residues 69 to 80 (GTGNARQGSSRS).

The protein belongs to the universal ribosomal protein uL4 family. As to quaternary structure, part of the 50S ribosomal subunit.

Its function is as follows. One of the primary rRNA binding proteins, this protein initially binds near the 5'-end of the 23S rRNA. It is important during the early stages of 50S assembly. It makes multiple contacts with different domains of the 23S rRNA in the assembled 50S subunit and ribosome. Forms part of the polypeptide exit tunnel. This chain is Large ribosomal subunit protein uL4, found in Chlorobaculum parvum (strain DSM 263 / NCIMB 8327) (Chlorobium vibrioforme subsp. thiosulfatophilum).